A 249-amino-acid chain; its full sequence is Orotidine 5'-phosphate decarboxylase (249 aa).

Substrate-binding positions include Asp-18, Lys-40, 67–76 (DLKYHDIPNT), Thr-127, Arg-188, Gln-197, Gly-217, and Arg-218. Catalysis depends on Lys-69, which acts as the Proton donor.

It belongs to the OMP decarboxylase family. Type 1 subfamily. As to quaternary structure, homodimer.

The enzyme catalyses orotidine 5'-phosphate + H(+) = UMP + CO2. Its pathway is pyrimidine metabolism; UMP biosynthesis via de novo pathway; UMP from orotate: step 2/2. In terms of biological role, catalyzes the decarboxylation of orotidine 5'-monophosphate (OMP) to uridine 5'-monophosphate (UMP). The chain is Orotidine 5'-phosphate decarboxylase from Baumannia cicadellinicola subsp. Homalodisca coagulata.